A 902-amino-acid chain; its full sequence is Cytosolic 10-formyltetrahydrofolate dehydrogenase (902 aa).

The segment at 1–310 (MKIAVIGQSL…LASNFFKGAA (310 aa)) is hydrolase domain. Residue Ser9 is modified to Phosphoserine. Lys38 bears the N6-succinyllysine mark. 88-90 (QFI) lines the (6R)-10-formyltetrahydrofolate pocket. The active-site Proton donor is the His106. Asp142 serves as a coordination point for (6R)-10-formyltetrahydrofolate. A Carrier domain is found at 318-395 (EAELVTAEAV…DFIQLLVRKL (78 aa)). Ser354 carries the O-(pantetheine 4'-phosphoryl)serine modification. An aldehyde dehydrogenase domain region spans residues 417-902 (TVRMPHQLFI…LRVKTVTFEY (486 aa)). Residues 571–573 (IPW) and 597–600 (KPAQ) contribute to the NADP(+) site. 2 positions are modified to phosphoserine: Ser629 and Ser631. NADP(+) is bound by residues 630–635 (GSLVGQ) and 650–651 (GS). Lys660 bears the N6-succinyllysine mark. Catalysis depends on Glu673, which acts as the Proton acceptor. Position 673–674 (673–674 (EL)) interacts with NADP(+). Cys707 functions as the Proton donor in the catalytic mechanism. Lys757 provides a ligand contact to NADP(+). Residue Lys767 is modified to N6-succinyllysine. An NADP(+)-binding site is contributed by 804-806 (ESF). Ser825 carries the phosphoserine modification. Lys882 is modified (N6-acetyllysine).

It in the N-terminal section; belongs to the GART family. The protein in the C-terminal section; belongs to the aldehyde dehydrogenase family. ALDH1L subfamily. As to quaternary structure, homotetramer. Post-translationally, phosphopantetheinylation at Ser-354 by AASDHPPT is required for the formyltetrahydrofolate dehydrogenase activity. As to expression, highly expressed in liver, pancreas and kidney.

The protein localises to the cytoplasm. It is found in the cytosol. The enzyme catalyses (6R)-10-formyltetrahydrofolate + NADP(+) + H2O = (6S)-5,6,7,8-tetrahydrofolate + CO2 + NADPH + H(+). Functionally, cytosolic 10-formyltetrahydrofolate dehydrogenase that catalyzes the NADP(+)-dependent conversion of 10-formyltetrahydrofolate to tetrahydrofolate and carbon dioxide. May also have an NADP(+)-dependent aldehyde dehydrogenase activity towards formaldehyde, acetaldehyde, propionaldehyde, and benzaldehyde. The polypeptide is Cytosolic 10-formyltetrahydrofolate dehydrogenase (Homo sapiens (Human)).